The sequence spans 333 residues: Ribosomal protein L11 methyltransferase (333 aa).

S-adenosyl-L-methionine-binding residues include threonine 181, glycine 202, aspartate 224, and asparagine 268.

Belongs to the methyltransferase superfamily. PrmA family.

The protein resides in the cytoplasm. It catalyses the reaction L-lysyl-[protein] + 3 S-adenosyl-L-methionine = N(6),N(6),N(6)-trimethyl-L-lysyl-[protein] + 3 S-adenosyl-L-homocysteine + 3 H(+). Its function is as follows. Methylates ribosomal protein L11. The sequence is that of Ribosomal protein L11 methyltransferase from Helicobacter pylori (strain ATCC 700392 / 26695) (Campylobacter pylori).